A 93-amino-acid chain; its full sequence is Small ribosomal subunit protein uS19 (93 aa).

It belongs to the universal ribosomal protein uS19 family.

In terms of biological role, protein S19 forms a complex with S13 that binds strongly to the 16S ribosomal RNA. This chain is Small ribosomal subunit protein uS19, found in Arthrobacter sp. (strain FB24).